We begin with the raw amino-acid sequence, 55 residues long: MAKGGREKIKLQSTAGTGHFYTTDKNKKTTPEKMLIMKFDPKARKHVEYKEIKLK.

The span at 1-10 (MAKGGREKIK) shows a compositional bias: basic and acidic residues. Residues 1 to 27 (MAKGGREKIKLQSTAGTGHFYTTDKNK) are disordered.

This sequence belongs to the bacterial ribosomal protein bL33 family.

In Polaromonas naphthalenivorans (strain CJ2), this protein is Large ribosomal subunit protein bL33.